Here is a 348-residue protein sequence, read N- to C-terminus: Fe(3+) ions import ATP-binding protein FbpC (348 aa).

One can recognise an ABC transporter domain in the interval 7 to 237 (VELRNVTKRF…PASRFMASFM (231 aa)). Position 39 to 46 (39 to 46 (GPSGCGKT)) interacts with ATP.

It belongs to the ABC transporter superfamily. Fe(3+) ion importer (TC 3.A.1.10) family. The complex is composed of two ATP-binding proteins (FbpC), two transmembrane proteins (FbpB) and a solute-binding protein (FbpA).

The protein localises to the cell inner membrane. The catalysed reaction is Fe(3+)(out) + ATP + H2O = Fe(3+)(in) + ADP + phosphate + H(+). In terms of biological role, part of the ABC transporter complex FbpABC involved in Fe(3+) ions import. Responsible for energy coupling to the transport system. In Escherichia coli O157:H7, this protein is Fe(3+) ions import ATP-binding protein FbpC.